The primary structure comprises 141 residues: Acetyltransferase YpeA (141 aa).

The N-acetyltransferase domain occupies 1 to 141; that stretch reads MEIRVFRQED…GKRLIEDEEY (141 aa).

It belongs to the acetyltransferase family. YpeA subfamily.

The sequence is that of Acetyltransferase YpeA (ypeA) from Escherichia coli (strain K12).